Reading from the N-terminus, the 242-residue chain is Venom nerve growth factor 2 (242 aa).

Residues 1–18 (MSMLCYTLIIAFLIGIWA) form the signal peptide. Positions 19-125 (APKSEDNVPL…ALNRNIRSKR (107 aa)) are excised as a propeptide. The segment at 46–69 (KALKTSRNTDQRHPAPKKAEDQEL) is disordered. Over residues 52–66 (RNTDQRHPAPKKAED) the composition is skewed to basic and acidic residues. Cystine bridges form between cysteine 139/cysteine 203, cysteine 181/cysteine 231, and cysteine 191/cysteine 233. Residue asparagine 147 is glycosylated (N-linked (GlcNAc...) asparagine).

It belongs to the NGF-beta family. Homodimer; non-covalently linked. In terms of tissue distribution, expressed by the venom gland.

The protein resides in the secreted. Functionally, nerve growth factor is important for the development and maintenance of the sympathetic and sensory nervous systems. It stimulates division and differentiation of sympathetic and embryonic sensory neurons as well as basal forebrain cholinergic neurons in the brain. Its relevance in the snake venom is not clear. However, it has been shown to inhibit metalloproteinase-dependent proteolysis of platelet glycoprotein Ib alpha, suggesting a metalloproteinase inhibition to prevent metalloprotease autodigestion and/or protection against prey proteases. Binds a lipid between the two protein chains in the homodimer. The lipid-bound form promotes histamine relase from mouse mast cells, contrary to the lipid-free form. This Demansia vestigiata (Lesser black whip snake) protein is Venom nerve growth factor 2.